The following is a 611-amino-acid chain: MCGIVGAIAERNITPILIEGLKRLEYRGYDSAGVAVFDNEGRLQRCRRVGKVASLEEGLAGTPLLGRLGIAHTRWATHGAPTEGNAHPHFSSDEVAVVHNGIIENHEPLRERLKGLGYVFTSQTDTEVIVHLLHHKLQSIGDLTLALKDAVKELHGAYGLAVISAAQPDRIVAARSGSPLVIGLGLGENFLASDQLALRQVTDRFIYLEEGDIAEIRRDSVRLWDVQGNDVQRETVQYHEGAEAADKGEYRHFMLKEIHEQPSVVQRTLEGRLGQNQVLVESFGPQAAELFAKVRNVQIVACGTSYHAGMVARYWLESLTGIPCQVEVASEFRYRKVAVQPDCLFVTISQSGETADTLAALRNAKELGFLSSVAICNVATSSLVRESDLTLLTQAGPEIGVASTKAFTTQLVALLLLTLGIGQVQKRLADGVEAELVDELRRLPTRLGEALAMNRTVEKVSELFAEKHHTLFLGRGAQFPVALEGALKLKEISYIHAEAYPAGELKHGPLALVDSDMPVVTVAPNNELVEKLKSNLQEVRARGGELVVFADEGAGIEAGEGTHVVGMPHIGDVLSPILYTIPLQLLSYHVAVLKGTDVDQPRNLAKSVTVE.

The active-site Nucleophile; for GATase activity is Cys2. Residues 2 to 219 (CGIVGAIAER…EGDIAEIRRD (218 aa)) enclose the Glutamine amidotransferase type-2 domain. 2 SIS domains span residues 287-427 (AAEL…VQKR) and 460-601 (VSEL…VDQP). Lys606 serves as the catalytic For Fru-6P isomerization activity.

In terms of assembly, homodimer.

It is found in the cytoplasm. It carries out the reaction D-fructose 6-phosphate + L-glutamine = D-glucosamine 6-phosphate + L-glutamate. In terms of biological role, catalyzes the first step in hexosamine metabolism, converting fructose-6P into glucosamine-6P using glutamine as a nitrogen source. The polypeptide is Glutamine--fructose-6-phosphate aminotransferase [isomerizing] (Pseudomonas aeruginosa (strain ATCC 15692 / DSM 22644 / CIP 104116 / JCM 14847 / LMG 12228 / 1C / PRS 101 / PAO1)).